Consider the following 712-residue polypeptide: Anaerobic ribonucleoside-triphosphate reductase (712 aa).

The 90-residue stretch at 3-92 (PHVMKRDGCK…EYRHDRDIQR (90 aa)) folds into the ATP-cone domain. A Glycine radical domain is found at 583–708 (KKVNPYDKID…VKRRVKHLGN (126 aa)). Residues Cys644, Cys647, Cys662, and Cys665 each coordinate Zn(2+). At Gly681 the chain carries Glycine radical.

This sequence belongs to the anaerobic ribonucleoside-triphosphate reductase family. Forms a tetramer composed of two NrdD and two NrdG subunits.

The enzyme catalyses a ribonucleoside 5'-triphosphate + formate + H(+) = a 2'-deoxyribonucleoside 5'-triphosphate + CO2 + H2O. Its activity is regulated as follows. Activated under anaerobic conditions by NrdG, a tightly associated activase. Activation involves the formation of a glycyl radical at Gly-681. Functionally, catalyzes the conversion of ribonucleotides into deoxyribonucleotides, which are required for DNA synthesis and repair. The protein is Anaerobic ribonucleoside-triphosphate reductase (nrdD) of Salmonella typhimurium (strain LT2 / SGSC1412 / ATCC 700720).